A 283-amino-acid chain; its full sequence is 1-deoxypentalenic acid 11-beta-hydroxylase (283 aa).

Arg-117 contacts substrate. 2 residues coordinate Fe cation: His-135 and Asp-137. 2-oxoglutarate is bound by residues 135–137 and Trp-151; that span reads HQD. Substrate is bound at residue Arg-186. His-224 lines the Fe cation pocket. Residues Ser-226 and Arg-238 each contribute to the 2-oxoglutarate site. The interval 260 to 283 is disordered; the sequence is WPESAKDASKGILSKITGTPTTAE.

Belongs to the PhyH family. It depends on Fe cation as a cofactor. The cofactor is L-ascorbate.

It catalyses the reaction 1-deoxypentalenate + 2-oxoglutarate + O2 = 1-deoxy-11beta-hydroxypentalenate + succinate + CO2. It participates in antibiotic biosynthesis; pentalenolactone biosynthesis. Its function is as follows. Catalyzes the conversion of 1-deoxypentalenic acid to 11-beta-hydroxy-1-deoxypentalenic acid in the biosynthesis of pentalenolactone antibiotic. This chain is 1-deoxypentalenic acid 11-beta-hydroxylase (penH), found in Streptomyces exfoliatus (Streptomyces hydrogenans).